Here is a 140-residue protein sequence, read N- to C-terminus: Profilin (140 aa).

The residue at position 2 (serine 2) is an N-acetylserine.

This sequence belongs to the profilin family. In terms of assembly, occurs in many kinds of cells as a complex with monomeric actin in a 1:1 ratio.

It localises to the cytoplasm. Its subcellular location is the cytoskeleton. In terms of biological role, binds to actin and affects the structure of the cytoskeleton. At high concentrations, profilin prevents the polymerization of actin, whereas it enhances it at low concentrations. By binding to PIP2, it inhibits the formation of IP3 and DG. The sequence is that of Profilin from Heliocidaris crassispina (Sea urchin).